The chain runs to 384 residues: Succinate--CoA ligase [ADP-forming] subunit beta (384 aa).

The region spanning 9–242 is the ATP-grasp domain; the sequence is KAILAQYKVP…LNEEDPLEVE (234 aa). ATP-binding positions include K45, 52-54, E98, L101, and E106; that span reads GRG. Mg(2+)-binding residues include N197 and D211. Substrate contacts are provided by residues N262 and 319-321; that span reads GIL.

It belongs to the succinate/malate CoA ligase beta subunit family. In terms of assembly, heterotetramer of two alpha and two beta subunits. It depends on Mg(2+) as a cofactor.

It carries out the reaction succinate + ATP + CoA = succinyl-CoA + ADP + phosphate. The catalysed reaction is GTP + succinate + CoA = succinyl-CoA + GDP + phosphate. It functions in the pathway carbohydrate metabolism; tricarboxylic acid cycle; succinate from succinyl-CoA (ligase route): step 1/1. Functionally, succinyl-CoA synthetase functions in the citric acid cycle (TCA), coupling the hydrolysis of succinyl-CoA to the synthesis of either ATP or GTP and thus represents the only step of substrate-level phosphorylation in the TCA. The beta subunit provides nucleotide specificity of the enzyme and binds the substrate succinate, while the binding sites for coenzyme A and phosphate are found in the alpha subunit. The polypeptide is Succinate--CoA ligase [ADP-forming] subunit beta (Solibacter usitatus (strain Ellin6076)).